Reading from the N-terminus, the 200-residue chain is Chromophore lyase CpcS/CpeS (200 aa).

It belongs to the CpcS/CpeS biliprotein lyase family.

Functionally, covalently attaches a chromophore to Cys residue(s) of phycobiliproteins. This chain is Chromophore lyase CpcS/CpeS, found in Synechococcus sp. (strain WH8020).